A 172-amino-acid chain; its full sequence is Counting factor-associated protein B (172 aa).

Residues 1–21 (MKLLNSLILLVLTCLVSSINT) form the signal peptide. N-linked (GlcNAc...) asparagine glycosylation is found at Asn37 and Asn153.

Its subcellular location is the secreted. The chain is Counting factor-associated protein B (cfaB) from Dictyostelium discoideum (Social amoeba).